Consider the following 274-residue polypeptide: 4-diphosphocytidyl-2-C-methyl-D-erythritol kinase (274 aa).

Residue Lys10 is part of the active site. 101–111 contacts ATP; the sequence is PTQAGLGGGSA. The active site involves Asp143.

Belongs to the GHMP kinase family. IspE subfamily.

It carries out the reaction 4-CDP-2-C-methyl-D-erythritol + ATP = 4-CDP-2-C-methyl-D-erythritol 2-phosphate + ADP + H(+). It functions in the pathway isoprenoid biosynthesis; isopentenyl diphosphate biosynthesis via DXP pathway; isopentenyl diphosphate from 1-deoxy-D-xylulose 5-phosphate: step 3/6. In terms of biological role, catalyzes the phosphorylation of the position 2 hydroxy group of 4-diphosphocytidyl-2C-methyl-D-erythritol. This Helicobacter pylori (strain HPAG1) protein is 4-diphosphocytidyl-2-C-methyl-D-erythritol kinase.